The sequence spans 67 residues: DNA-directed RNA polymerase subunit omega (67 aa).

Belongs to the RNA polymerase subunit omega family. The RNAP catalytic core consists of 2 alpha, 1 beta, 1 beta' and 1 omega subunit. When a sigma factor is associated with the core the holoenzyme is formed, which can initiate transcription.

It catalyses the reaction RNA(n) + a ribonucleoside 5'-triphosphate = RNA(n+1) + diphosphate. Promotes RNA polymerase assembly. Latches the N- and C-terminal regions of the beta' subunit thereby facilitating its interaction with the beta and alpha subunits. This chain is DNA-directed RNA polymerase subunit omega, found in Paraburkholderia phymatum (strain DSM 17167 / CIP 108236 / LMG 21445 / STM815) (Burkholderia phymatum).